The primary structure comprises 130 residues: Small ribosomal subunit protein uS8 (130 aa).

The protein belongs to the universal ribosomal protein uS8 family. As to quaternary structure, part of the 30S ribosomal subunit.

Functionally, one of the primary rRNA binding proteins, it binds directly to 16S rRNA central domain where it helps coordinate assembly of the platform of the 30S subunit. This is Small ribosomal subunit protein uS8 from Haloarcula marismortui (strain ATCC 43049 / DSM 3752 / JCM 8966 / VKM B-1809) (Halobacterium marismortui).